A 271-amino-acid polypeptide reads, in one-letter code: Tropinone reductase homolog At2g29360 (271 aa).

22 to 46 (LVTGGSKGIGEAVVEELATLGARIH) serves as a coordination point for NADP(+). Serine 155 contributes to the substrate binding site. Tyrosine 168 (proton acceptor) is an active-site residue.

It belongs to the short-chain dehydrogenases/reductases (SDR) family. SDR65C subfamily.

In terms of biological role, oxidoreductase active on cyclic ketones, but not on tropinone or nortropinone. This Arabidopsis thaliana (Mouse-ear cress) protein is Tropinone reductase homolog At2g29360.